Reading from the N-terminus, the 362-residue chain is Type II methyltransferase M.MamI (362 aa).

This sequence belongs to the N(4)/N(6)-methyltransferase family.

The catalysed reaction is a 2'-deoxyadenosine in DNA + S-adenosyl-L-methionine = an N(6)-methyl-2'-deoxyadenosine in DNA + S-adenosyl-L-homocysteine + H(+). In terms of biological role, a gamma subtype methylase that recognizes the double-stranded sequence 5'-GATNNNNATC-3', methylates A-? on both strands, and protects the DNA from cleavage by the MamI endonuclease. In Microbacterium ammoniaphilum, this protein is Type II methyltransferase M.MamI.